A 314-amino-acid chain; its full sequence is Vacuolar membrane protein SCRG_03194 (314 aa).

A disordered region spans residues 32 to 60 (KPTSSVVSETSSKSLPSLTSSAFSTSSGA). A helical membrane pass occupies residues 93–113 (VYIAVGAVIGAIFISILIWWL). 3 positions are modified to phosphoserine: serine 148, serine 254, and serine 274. A disordered region spans residues 240–309 (EERKLNLNRP…PSMFLDDVLN (70 aa)). Over residues 254–269 (SPERKEKKINSMEGYH) the composition is skewed to basic and acidic residues.

It belongs to the PRM5 family.

It localises to the vacuole membrane. The protein is Vacuolar membrane protein SCRG_03194 of Saccharomyces cerevisiae (strain RM11-1a) (Baker's yeast).